Consider the following 164-residue polypeptide: ATP synthase subunit b (164 aa).

Residues 6-26 form a helical membrane-spanning segment; it reads GELVGNFILVTGSVIVLLLLI.

Belongs to the ATPase B chain family. In terms of assembly, F-type ATPases have 2 components, F(1) - the catalytic core - and F(0) - the membrane proton channel. F(1) has five subunits: alpha(3), beta(3), gamma(1), delta(1), epsilon(1). F(0) has three main subunits: a(1), b(2) and c(10-14). The alpha and beta chains form an alternating ring which encloses part of the gamma chain. F(1) is attached to F(0) by a central stalk formed by the gamma and epsilon chains, while a peripheral stalk is formed by the delta and b chains.

It localises to the cell membrane. Its function is as follows. F(1)F(0) ATP synthase produces ATP from ADP in the presence of a proton or sodium gradient. F-type ATPases consist of two structural domains, F(1) containing the extramembraneous catalytic core and F(0) containing the membrane proton channel, linked together by a central stalk and a peripheral stalk. During catalysis, ATP synthesis in the catalytic domain of F(1) is coupled via a rotary mechanism of the central stalk subunits to proton translocation. Component of the F(0) channel, it forms part of the peripheral stalk, linking F(1) to F(0). This is ATP synthase subunit b from Streptococcus pyogenes serotype M6 (strain ATCC BAA-946 / MGAS10394).